The chain runs to 1180 residues: RecBCD enzyme subunit RecB (1180 aa).

Residues 2–450 form the UvrD-like helicase ATP-binding domain; it reads SDVAETLDPL…YTLDTNWRSA (449 aa). The segment at 2-853 is ATPase, DNA-binding and helicase activity, interacts with RecC; that stretch reads SDVAETLDPL…KGEPQDAAGL (852 aa). 23–30 lines the ATP pocket; sequence ASAGTGKT. Residues 252 to 254 mediate DNA binding; that stretch reads IDR. Residue W447 participates in ATP binding. The region spanning 480 to 746 is the UvrD-like helicase C-terminal domain; it reads SAGKNQALRF…QIVTIHKSKG (267 aa). 3 consecutive DNA-binding regions follow at residues 511–512, 560–561, and R761; these read VG and SR. Positions 900–1180 are nuclease activity, interacts with RecD and RecA; the sequence is NWRVTSYSGL…MFAGMTLEEA (281 aa). Positions 956, 1067, 1080, and 1081 each coordinate Mg(2+). The active-site For nuclease activity is D1080.

Belongs to the helicase family. UvrD subfamily. As to quaternary structure, heterotrimer of RecB, RecC and RecD. All subunits contribute to DNA-binding. The C-terminus interacts with RecA. Interacts with YgbT (Cas1). In terms of assembly, (Microbial infection) Lambda virus GamS protein interacts with the enzyme without displacing any of the subunits. It depends on Mg(2+) as a cofactor.

It carries out the reaction Exonucleolytic cleavage (in the presence of ATP) in either 5'- to 3'- or 3'- to 5'-direction to yield 5'-phosphooligonucleotides.. The enzyme catalyses Couples ATP hydrolysis with the unwinding of duplex DNA by translocating in the 3'-5' direction.. The catalysed reaction is ATP + H2O = ADP + phosphate + H(+). After reacting with DNA bearing a Chi site the holoenzyme is disassembled and loses exonuclease activity, DNA unwinding and Chi-directed DNA cleavage; RecB remains complexed with ssDNA, which may prevent holoenzyme reassembly. High levels of Mg(2+) (13 mM MgCl(2+)) or incubation with DNase allows holoenzyme reassembly, suggesting it is DNA bound to RecB that prevents reassembly. With respect to regulation, (Microbial infection) RecBCD is inhibited by the lambda virus gam protein (both GamL and GamS isoforms); in vitro a short preincubation prior to adding DNA results in maximal inhibition. In terms of biological role, a helicase/nuclease that prepares dsDNA breaks (DSB) for recombinational DNA repair. Binds to DSBs and unwinds DNA via a rapid (&gt;1 kb/second) and highly processive (&gt;30 kb) ATP-dependent bidirectional helicase. Unwinds dsDNA until it encounters a Chi (crossover hotspot instigator, 5'-GCTGGTGG-3') sequence from the 3' direction. Cuts ssDNA a few nucleotides 3' to Chi site, by nicking one strand or switching the strand degraded (depending on the reaction conditions). The properties and activities of the enzyme are changed at Chi. The Chi-altered holoenzyme produces a long 3'-ssDNA overhang which facilitates RecA-binding to the ssDNA for homologous DNA recombination and repair. Holoenzyme degrades any linearized DNA that is unable to undergo homologous recombination. In the holoenzyme this subunit contributes ATPase, 3'-5' helicase, exonuclease activity and loads RecA onto ssDNA. The RecBC complex requires the RecD subunit for nuclease activity, but can translocate along ssDNA in both directions. The RecBCD complex does not unwind G-quadruplex DNA. Probably interacts with a component of retron Ec48 which moniters RecBCD stability; when RecB is missing or impaired the retron is activated and becomes toxic. The chain is RecBCD enzyme subunit RecB from Escherichia coli (strain K12).